Consider the following 150-residue polypeptide: Large ribosomal subunit protein bL9 (150 aa).

Belongs to the bacterial ribosomal protein bL9 family.

In terms of biological role, binds to the 23S rRNA. The polypeptide is Large ribosomal subunit protein bL9 (Baumannia cicadellinicola subsp. Homalodisca coagulata).